Consider the following 107-residue polypeptide: uncharacterized protein (107 aa).

3 helical membrane-spanning segments follow: residues 15-35, 43-63, and 87-107; these read TGSY…LGIS, LYRV…WLSY, and YFPS…IFCF.

The protein resides in the membrane. This is an uncharacterized protein from Saccharomyces cerevisiae (strain ATCC 204508 / S288c) (Baker's yeast).